The chain runs to 319 residues: Biotin synthase (319 aa).

Positions 44 to 273 constitute a Radical SAM core domain; the sequence is IHGDGIDLCS…EAKIRLAGGR (230 aa). The [4Fe-4S] cluster site is built by C62, C66, and C69. [2Fe-2S] cluster contacts are provided by S106, C138, C198, and R268.

This sequence belongs to the radical SAM superfamily. Biotin synthase family. In terms of assembly, homodimer. [4Fe-4S] cluster serves as cofactor. It depends on [2Fe-2S] cluster as a cofactor.

It carries out the reaction (4R,5S)-dethiobiotin + (sulfur carrier)-SH + 2 reduced [2Fe-2S]-[ferredoxin] + 2 S-adenosyl-L-methionine = (sulfur carrier)-H + biotin + 2 5'-deoxyadenosine + 2 L-methionine + 2 oxidized [2Fe-2S]-[ferredoxin]. It participates in cofactor biosynthesis; biotin biosynthesis; biotin from 7,8-diaminononanoate: step 2/2. In terms of biological role, catalyzes the conversion of dethiobiotin (DTB) to biotin by the insertion of a sulfur atom into dethiobiotin via a radical-based mechanism. The protein is Biotin synthase of Clostridium perfringens (strain 13 / Type A).